The chain runs to 378 residues: uncharacterized protein (378 aa).

The span at 1 to 11 shows a compositional bias: basic residues; sequence MSPMNRQRKNK. The segment at 1-23 is disordered; the sequence is MSPMNRQRKNKSNVLNEKDERPG.

This is an uncharacterized protein from Caenorhabditis elegans.